The sequence spans 190 residues: Tegument antigen (190 aa).

2 consecutive EF-hand domains span residues 8–43 (SQME…YRLD) and 51–77 (IARF…KVSE). Ca(2+)-binding residues include D55, D57, D59, K61, and E66.

In terms of tissue distribution, adult and schistosomula tegument.

This is Tegument antigen from Schistosoma mansoni (Blood fluke).